A 156-amino-acid polypeptide reads, in one-letter code: Small ribosomal subunit protein uS7 (156 aa).

This sequence belongs to the universal ribosomal protein uS7 family. In terms of assembly, part of the 30S ribosomal subunit. Contacts proteins S9 and S11.

Functionally, one of the primary rRNA binding proteins, it binds directly to 16S rRNA where it nucleates assembly of the head domain of the 30S subunit. Is located at the subunit interface close to the decoding center, probably blocks exit of the E-site tRNA. The polypeptide is Small ribosomal subunit protein uS7 (Edwardsiella ictaluri (strain 93-146)).